We begin with the raw amino-acid sequence, 843 residues long: Probable cleavage and polyadenylation specificity factor subunit 2 (843 aa).

The segment covering 414–425 has biased composition (basic and acidic residues); the sequence is AEETRLRMERAR. Disordered regions lie at residues 414 to 443 and 691 to 753; these read AEET…DIAA and DKNR…TKGK. The segment covering 432 to 441 has biased composition (acidic residues); that stretch reads ESDDSDDDDI. A compositionally biased stretch (basic and acidic residues) spans 732–746; that stretch reads SGKEVENGHTNDSRT.

The protein belongs to the metallo-beta-lactamase superfamily. RNA-metabolizing metallo-beta-lactamase-like family. CPSF2/YSH1 subfamily. As to quaternary structure, CPSF is a heterotetramer composed of four distinct subunits 160, 100, 70 and 30 kDa.

Its subcellular location is the nucleus. In terms of biological role, CPSF plays a key role in pre-mRNA 3'-end formation, recognizing the AAUAAA signal sequence and interacting with poly(A)polymerase and other factors to bring about cleavage and poly(A) addition. The sequence is that of Probable cleavage and polyadenylation specificity factor subunit 2 (cpsf-2) from Caenorhabditis elegans.